We begin with the raw amino-acid sequence, 447 residues long: RNA-binding protein 208 (447 aa).

2 consecutive RRM domains span residues 73–147 (RSVY…WAYA) and 158–236 (FHIF…WATK). A compositionally biased stretch (polar residues) spans 254–269 (TNGSSSNPGMEASQDT). Disordered stretches follow at residues 254–279 (TNGS…ENNP) and 353–372 (WGNK…PPLP). The RRM 3 domain maps to 282-356 (TTVYVGNLGH…KPIKCSWGNK (75 aa)).

In terms of assembly, interacts with RBP-P.

In terms of biological role, RNA-binding protein. This chain is RNA-binding protein 208, found in Oryza sativa subsp. japonica (Rice).